Reading from the N-terminus, the 88-residue chain is Cell division topological specificity factor (88 aa).

The protein belongs to the MinE family.

In terms of biological role, prevents the cell division inhibition by proteins MinC and MinD at internal division sites while permitting inhibition at polar sites. This ensures cell division at the proper site by restricting the formation of a division septum at the midpoint of the long axis of the cell. This Methylibium petroleiphilum (strain ATCC BAA-1232 / LMG 22953 / PM1) protein is Cell division topological specificity factor.